A 317-amino-acid chain; its full sequence is Acetyl-coenzyme A carboxylase carboxyl transferase subunit alpha (317 aa).

The CoA carboxyltransferase C-terminal domain maps to 39–293; sequence KLEAKAQKAL…KEAVVEALGA (255 aa).

The protein belongs to the AccA family. In terms of assembly, acetyl-CoA carboxylase is a heterohexamer composed of biotin carboxyl carrier protein (AccB), biotin carboxylase (AccC) and two subunits each of ACCase subunit alpha (AccA) and ACCase subunit beta (AccD).

It is found in the cytoplasm. It catalyses the reaction N(6)-carboxybiotinyl-L-lysyl-[protein] + acetyl-CoA = N(6)-biotinyl-L-lysyl-[protein] + malonyl-CoA. It functions in the pathway lipid metabolism; malonyl-CoA biosynthesis; malonyl-CoA from acetyl-CoA: step 1/1. Its function is as follows. Component of the acetyl coenzyme A carboxylase (ACC) complex. First, biotin carboxylase catalyzes the carboxylation of biotin on its carrier protein (BCCP) and then the CO(2) group is transferred by the carboxyltransferase to acetyl-CoA to form malonyl-CoA. The polypeptide is Acetyl-coenzyme A carboxylase carboxyl transferase subunit alpha (Beijerinckia indica subsp. indica (strain ATCC 9039 / DSM 1715 / NCIMB 8712)).